The chain runs to 227 residues: Cytochrome c oxidase subunit 2 (227 aa).

Residues 1–14 (MAYPFELGFQDATS) are Mitochondrial intermembrane-facing. The chain crosses the membrane as a helical span at residues 15-45 (PIMEELLHFHDHTLMIVFLISSLVLYIISLM). At 46 to 59 (LTTKLTHTSTMDAQ) the chain is on the mitochondrial matrix side. A helical transmembrane segment spans residues 60–87 (EVETIWTILPAIILILIALPSLRILYMM). Residues 88-227 (DEINDPSLTV…HFENWSSSML (140 aa)) are Mitochondrial intermembrane-facing. Residues histidine 161, cysteine 196, glutamate 198, cysteine 200, histidine 204, and methionine 207 each coordinate Cu cation. Glutamate 198 contributes to the Mg(2+) binding site.

The protein belongs to the cytochrome c oxidase subunit 2 family. As to quaternary structure, component of the cytochrome c oxidase (complex IV, CIV), a multisubunit enzyme composed of 14 subunits. The complex is composed of a catalytic core of 3 subunits MT-CO1, MT-CO2 and MT-CO3, encoded in the mitochondrial DNA, and 11 supernumerary subunits COX4I, COX5A, COX5B, COX6A, COX6B, COX6C, COX7A, COX7B, COX7C, COX8 and NDUFA4, which are encoded in the nuclear genome. The complex exists as a monomer or a dimer and forms supercomplexes (SCs) in the inner mitochondrial membrane with NADH-ubiquinone oxidoreductase (complex I, CI) and ubiquinol-cytochrome c oxidoreductase (cytochrome b-c1 complex, complex III, CIII), resulting in different assemblies (supercomplex SCI(1)III(2)IV(1) and megacomplex MCI(2)III(2)IV(2)). Found in a complex with TMEM177, COA6, COX18, COX20, SCO1 and SCO2. Interacts with TMEM177 in a COX20-dependent manner. Interacts with COX20. Interacts with COX16. The cofactor is Cu cation.

Its subcellular location is the mitochondrion inner membrane. The catalysed reaction is 4 Fe(II)-[cytochrome c] + O2 + 8 H(+)(in) = 4 Fe(III)-[cytochrome c] + 2 H2O + 4 H(+)(out). Functionally, component of the cytochrome c oxidase, the last enzyme in the mitochondrial electron transport chain which drives oxidative phosphorylation. The respiratory chain contains 3 multisubunit complexes succinate dehydrogenase (complex II, CII), ubiquinol-cytochrome c oxidoreductase (cytochrome b-c1 complex, complex III, CIII) and cytochrome c oxidase (complex IV, CIV), that cooperate to transfer electrons derived from NADH and succinate to molecular oxygen, creating an electrochemical gradient over the inner membrane that drives transmembrane transport and the ATP synthase. Cytochrome c oxidase is the component of the respiratory chain that catalyzes the reduction of oxygen to water. Electrons originating from reduced cytochrome c in the intermembrane space (IMS) are transferred via the dinuclear copper A center (CU(A)) of subunit 2 and heme A of subunit 1 to the active site in subunit 1, a binuclear center (BNC) formed by heme A3 and copper B (CU(B)). The BNC reduces molecular oxygen to 2 water molecules using 4 electrons from cytochrome c in the IMS and 4 protons from the mitochondrial matrix. In Tamias amoenus (Yellow-pine chipmunk), this protein is Cytochrome c oxidase subunit 2 (MT-CO2).